Here is a 188-residue protein sequence, read N- to C-terminus: Ribosomal RNA small subunit methyltransferase G (188 aa).

S-adenosyl-L-methionine contacts are provided by residues G69, F74, V119–Q120, and R134.

This sequence belongs to the methyltransferase superfamily. RNA methyltransferase RsmG family.

It localises to the cytoplasm. The catalysed reaction is guanosine(527) in 16S rRNA + S-adenosyl-L-methionine = N(7)-methylguanosine(527) in 16S rRNA + S-adenosyl-L-homocysteine. Its function is as follows. Specifically methylates the N7 position of guanine in position 527 of 16S rRNA. The chain is Ribosomal RNA small subunit methyltransferase G from Campylobacter jejuni subsp. jejuni serotype O:23/36 (strain 81-176).